Consider the following 216-residue polypeptide: Probable RNA 2'-phosphotransferase 1 (216 aa).

Belongs to the KptA/TPT1 family.

In terms of biological role, removes the 2'-phosphate from RNA via an intermediate in which the phosphate is ADP-ribosylated by NAD followed by a presumed transesterification to release the RNA and generate ADP-ribose 1''-2''-cyclic phosphate (APPR&gt;P). May function as an ADP-ribosylase. This chain is Probable RNA 2'-phosphotransferase 1 (kptA1), found in Archaeoglobus fulgidus (strain ATCC 49558 / DSM 4304 / JCM 9628 / NBRC 100126 / VC-16).